The sequence spans 557 residues: Aspartate--tRNA ligase (557 aa).

L-aspartate is bound at residue Glu-168. The interval Gln-192–Lys-195 is aspartate. Arg-214 provides a ligand contact to L-aspartate. Residues Arg-214–Glu-216 and Gln-223 contribute to the ATP site. An L-aspartate-binding site is contributed by His-423. Residue Glu-457 coordinates ATP. L-aspartate is bound at residue Arg-464. An ATP-binding site is contributed by Gly-505–Arg-508.

This sequence belongs to the class-II aminoacyl-tRNA synthetase family. Type 1 subfamily. As to quaternary structure, homodimer.

The protein localises to the cytoplasm. The enzyme catalyses tRNA(Asp) + L-aspartate + ATP = L-aspartyl-tRNA(Asp) + AMP + diphosphate. Its function is as follows. Catalyzes the attachment of L-aspartate to tRNA(Asp) in a two-step reaction: L-aspartate is first activated by ATP to form Asp-AMP and then transferred to the acceptor end of tRNA(Asp). This Mycoplasma pneumoniae (strain ATCC 29342 / M129 / Subtype 1) (Mycoplasmoides pneumoniae) protein is Aspartate--tRNA ligase.